A 200-amino-acid polypeptide reads, in one-letter code: Phospholipase A2 inhibitor CgMIP-I (200 aa).

The first 19 residues, Met-1–Ser-19, serve as a signal peptide directing secretion. 7 cysteine pairs are disulfide-bonded: Cys-22/Cys-46, Cys-25/Cys-32, Cys-39/Cys-67, Cys-73/Cys-94, Cys-95/Cys-100, Cys-118/Cys-143, and Cys-136/Cys-165. Asn-176 is a glycosylation site (N-linked (GlcNAc...) asparagine).

Belongs to the CNF-like-inhibitor family. Homomer of 110 kDa composed of 20-25-kDa subunits. N-glycosylated. The glycosidic chain may contain superficial sialic acid residues. As to expression, expressed by the liver.

The protein resides in the secreted. Its function is as follows. Inhibits the enzymatic activity of basic phospholipase A2. Specifically neutralizes PLA2, myotoxic, edema-forming, cytolytic, and anti-coagulant activities, as well as intracerebral lethal effect of the basic myotoxin I from the same venom (AC P0DQP6), crotoxin heterodimer and crotoxin subunit B alone. Does not block the enzymatic activity of crude acidic PLA2 fractions from the same venom. In Cerrophidion godmani (Porthidium godmani), this protein is Phospholipase A2 inhibitor CgMIP-I.